A 56-amino-acid chain; its full sequence is MAVPARRTSKAKKNKRRTHKGLTAPGLSRDSETGEYRMSHRISPDGTYKGRTIIEK.

Residues 1–56 (MAVPARRTSKAKKNKRRTHKGLTAPGLSRDSETGEYRMSHRISPDGTYKGRTIIEK) are disordered. A compositionally biased stretch (basic residues) spans 7-20 (RTSKAKKNKRRTHK). A compositionally biased stretch (basic and acidic residues) spans 29 to 38 (RDSETGEYRM).

It belongs to the bacterial ribosomal protein bL32 family.

The protein is Large ribosomal subunit protein bL32A (rpmF1) of Listeria innocua serovar 6a (strain ATCC BAA-680 / CLIP 11262).